A 547-amino-acid chain; its full sequence is Mercuric reductase (547 aa).

The HMA domain maps to 4-67 (NSYKIPIQGM…NISAAGYQPG (64 aa)). A metal cation is bound by residues Cys15 and Cys18. Residues Ala97, Gly117, and Thr122 each contribute to the FAD site. Cys123 and Cys128 are joined by a disulfide. FAD is bound by residues Lys132, Ala196, Asp388, and Val396. The Hg(2+) site is built by Cys544 and Cys545.

It belongs to the class-I pyridine nucleotide-disulfide oxidoreductase family. As to quaternary structure, homodimer. FAD is required as a cofactor.

It carries out the reaction Hg + NADP(+) + H(+) = Hg(2+) + NADPH. In terms of biological role, resistance to Hg(2+) in bacteria appears to be governed by a specialized system which includes mercuric reductase. MerA protein is responsible for volatilizing mercury as Hg(0). This Staphylococcus aureus protein is Mercuric reductase (merA).